Reading from the N-terminus, the 512-residue chain is Glycerol-3-phosphate dehydrogenase (512 aa).

16 to 44 is an FAD binding site; the sequence is DVAVVGGGINGVGIAADAAGRGLSVFLCE.

The protein belongs to the FAD-dependent glycerol-3-phosphate dehydrogenase family. Requires FAD as cofactor.

Its subcellular location is the cytoplasm. It catalyses the reaction a quinone + sn-glycerol 3-phosphate = dihydroxyacetone phosphate + a quinol. This chain is Glycerol-3-phosphate dehydrogenase (glpD), found in Pseudomonas aeruginosa (strain ATCC 15692 / DSM 22644 / CIP 104116 / JCM 14847 / LMG 12228 / 1C / PRS 101 / PAO1).